A 138-amino-acid chain; its full sequence is Superoxide dismutase [Mn] (138 aa).

4 residues coordinate Mn(2+): histidine 1, histidine 49, aspartate 133, and histidine 137.

This sequence belongs to the iron/manganese superoxide dismutase family. Mn(2+) serves as cofactor.

The catalysed reaction is 2 superoxide + 2 H(+) = H2O2 + O2. Destroys superoxide anion radicals which are normally produced within the cells and which are toxic to biological systems. The polypeptide is Superoxide dismutase [Mn] (sodA) (Mycobacterium malmoense).